The primary structure comprises 644 residues: ATP-dependent zinc metalloprotease FtsH (644 aa).

Over 1–11 (MNDNKNNTVRN) the chain is Stromal. Residues 12 to 32 (LLIGIALLSGISLTAKKFDLI) traverse the membrane as a helical segment. Residues 33-128 (GVQGSESGKN…FDAHPAEQKN (96 aa)) lie on the Lumenal side of the membrane. A helical membrane pass occupies residues 129–149 (IFVNILSNILLPIIFITGLVY). Topologically, residues 150-644 (LFQNSENFGG…KNIPYVSKFN (495 aa)) are stromal. Residue 226–233 (GPPGTGKT) participates in ATP binding. A Zn(2+)-binding site is contributed by His-447. The active site involves Glu-448. Residues His-451 and Asp-525 each coordinate Zn(2+).

In the central section; belongs to the AAA ATPase family. It in the C-terminal section; belongs to the peptidase M41 family. In terms of assembly, homohexamer. Requires Zn(2+) as cofactor.

It is found in the plastid. Its subcellular location is the chloroplast thylakoid membrane. Its function is as follows. Acts as a processive, ATP-dependent zinc metallopeptidase. The sequence is that of ATP-dependent zinc metalloprotease FtsH from Trieres chinensis (Marine centric diatom).